The following is a 42-amino-acid chain: Photosystem II reaction center protein J (42 aa).

Residues 10 to 30 (IPLWLVGTVVGLLAIGLLALF) form a helical membrane-spanning segment.

The protein belongs to the PsbJ family. In terms of assembly, PSII is composed of 1 copy each of membrane proteins PsbA, PsbB, PsbC, PsbD, PsbE, PsbF, PsbH, PsbI, PsbJ, PsbK, PsbL, PsbM, PsbT, PsbX, PsbY, PsbZ, Psb30/Ycf12, at least 3 peripheral proteins of the oxygen-evolving complex and a large number of cofactors. It forms dimeric complexes.

The protein localises to the plastid. The protein resides in the chloroplast thylakoid membrane. One of the components of the core complex of photosystem II (PSII). PSII is a light-driven water:plastoquinone oxidoreductase that uses light energy to abstract electrons from H(2)O, generating O(2) and a proton gradient subsequently used for ATP formation. It consists of a core antenna complex that captures photons, and an electron transfer chain that converts photonic excitation into a charge separation. This chain is Photosystem II reaction center protein J, found in Mesostigma viride (Green alga).